Reading from the N-terminus, the 717-residue chain is Probable inactive histone-lysine N-methyltransferase SUVR2 (717 aa).

Residues 61–73 show a composition bias toward basic and acidic residues; it reads QAIQESEEKKADE. Positions 61-136 are disordered; sequence QAIQESEEKK…LGSPTLEGPS (76 aa). The span at 120–130 shows a compositional bias: low complexity; it reads SALASPSLGSP. Zn(2+) contacts are provided by cysteine 445, cysteine 446, cysteine 449, cysteine 453, cysteine 462, cysteine 529, cysteine 533, cysteine 535, and cysteine 539. One can recognise a Pre-SET domain in the interval 458 to 547; sequence MACRCATAFN…NCGNRVVQQG (90 aa). An SET domain is found at 550–679; sequence NKLQVFFTPN…AMEELTWDYG (130 aa). Residues 561–563 and 635–636 contribute to the S-adenosyl-L-methionine site; these read RGW and NH. A Zn(2+)-binding site is contributed by cysteine 638. Residue tyrosine 678 participates in S-adenosyl-L-methionine binding. The Post-SET domain maps to 690 to 706; sequence SPFHCQCGSDFCRVRKQ. Residues cysteine 694, cysteine 696, and cysteine 701 each contribute to the Zn(2+) site.

It belongs to the class V-like SAM-binding methyltransferase superfamily. Histone-lysine methyltransferase family. Interacts with SUVR1, CHR19, CHR28 and itself. Interacts with CHR27.

Its subcellular location is the nucleus. It localises to the chromosome. Probable inactive histone-lysine methyltransferase that acts as regulator of transctiptional gene silencing independently of histone H3K9 methylation. Contributes to transcriptional gene silencing at RNA-directed DNA methylation (RdDM) target loci but also at RdDM-independent target loci. Forms a complex with SUVR1 and associates with the SNF2-related chromatin-remodeling proteins CHR19, CHR27, and CHR28, thereby mediating nucleosome positioning and transcriptional silencing. Does not possess histone-lysine methyltransferase activity in vitro, and the conserved catalytic sites of SUVR2 are dispensable for its function in transcriptional gene silencing. In Arabidopsis thaliana (Mouse-ear cress), this protein is Probable inactive histone-lysine N-methyltransferase SUVR2 (SUVR2).